A 256-amino-acid polypeptide reads, in one-letter code: Protein CC2D2B homolog (256 aa).

The segment at 1 to 24 (MSEEMDNVTAEEITDKHLQKDLDA) is disordered. Residues 13 to 22 (ITDKHLQKDL) are compositionally biased toward basic and acidic residues. 2 coiled-coil regions span residues 136 to 159 (DLLK…KANI) and 194 to 214 (EIYK…EEGK).

This Macaca fascicularis (Crab-eating macaque) protein is Protein CC2D2B homolog.